The sequence spans 262 residues: Versicolorin reductase 1 (262 aa).

Residues Ile21, Asp67, Asn94, and Arg127 each contribute to the NADP(+) site. Residues Ser143 and Ser144 each act as proton donor in the active site. Residues Tyr158, Lys162, Ile191, and Thr193 each coordinate NADP(+). Tyr158 functions as the Proton acceptor in the catalytic mechanism. Residue Lys162 is the Lowers pKa of active site Tyr of the active site.

It belongs to the short-chain dehydrogenases/reductases (SDR) family.

The protein localises to the cytoplasm. The protein resides in the cytosol. The enzyme catalyses (4S,8R)-2,13,16,20-tetrahydroxy-7,9-dioxapentacyclo[10.8.0.0(3,10).0(4,8).0(14,19)]icosa-1(12),2,5,10,13,16,19-heptaen-18-one + NADPH + H(+) = (4S,8R,16R)-2,13,16,20-tetrahydroxy-7,9-dioxapentacyclo[10.8.0.0(3,10).0(4,8).0(14,19)]icosa-1(12),2,5,10,13,19-hexaen-18-one + NADP(+). The protein operates within mycotoxin biosynthesis; aflatoxin biosynthesis. Its function is as follows. Cytochrome P450 monooxygenase; part of the gene cluster that mediates the biosynthesis of aflatoxins, a group of polyketide-derived furanocoumarins, and part of the most toxic and carcinogenic compounds among the known mycotoxins. The four major aflatoxins produced by A.parasiticus are aflatoxin B1 (AFB1), aflatoxin B2 (AFB2), aflatoxin G1 (AFG1) and aflatoxin G2 (AFG2). Within the aflatoxin pathway, with the cytochrome P450 monooxygenase aflN, the versicolorin reductase aflM, is involved in conversion of VERA to demethylsterigmatocystin (DMST). The biosynthesis of aflatoxins begins with the norsolorinic acid synthase aflC that combines a hexanoyl starter unit produced by the fatty acid synthase aflA/aflB and 7 malonyl-CoA extender units to synthesize the precursor NOR. The second step is the conversion of NOR to averantin and requires the norsolorinic acid ketoreductase aflD, which catalyzes the dehydration of norsolorinic acid to form (1'S)-averantin. The norsolorinic acid reductases aflE and aflF may also play a role in the conversion of NOR to AVN. The cytochrome P450 monooxygenase aflG then catalyzes the hydroxylation of AVN to 5'hydroxyaverantin (HAVN). The next step is performed by the 5'-hydroxyaverantin dehydrogenase aflH that transforms HAVN to 5'-oxoaverantin (OAVN) which is further converted to averufin (AVF) by aflK that plays a dual role in the pathway, as a 5'-oxoaverantin cyclase that mediates conversion of 5'-oxoaverantin, as well as a versicolorin B synthase in a later step in the pathway. The averufin oxidase aflI catalyzes the conversion of AVF to versiconal hemiacetal acetate (VHA). VHA is then the substrate for the versiconal hemiacetal acetate esterase aflJ to yield versiconal (VAL). Versicolorin B synthase aflK then converts VAL to versicolorin B (VERB) by closing the bisfuran ring of aflatoxin which is required for DNA-binding, thus giving to aflatoxin its activity as a mutagen. Then, the activity of the versicolorin B desaturase aflL leads to versicolorin A (VERA). A branch point starts from VERB since it can also be converted to dihydrodemethylsterigmatocystin (DMDHST), probably also by aflL, VERA being a precursor for aflatoxins B1 and G1, and DMDHST for aflatoxins B2 and G2. Next, the versicolorin reductase aflM and the cytochrome P450 monooxygenase aflN are involved in conversion of VERA to demethylsterigmatocystin (DMST). AflX and aflY seem also involved in this step, through probable aflX-mediated epoxide ring-opening step following versicolorin A oxidation and aflY-mediated Baeyer-Villiger oxidation required for the formation of the xanthone ring. The methyltransferase aflO then leads to the modification of DMST to sterigmatocystin (ST), and of DMDHST to dihydrosterigmatocystin (DHST). Both ST and DHST are then substrates of the O-methyltransferase aflP to yield O-methylsterigmatocystin (OMST) and dihydro-O-methylsterigmatocystin (DHOMST), respectively. Finally OMST is converted to aflatoxins B1 and G1, and DHOMST to aflatoxins B2 and G2, via the action of several enzymes including O-methylsterigmatocystin oxidoreductase aflQ, the cytochrome P450 monooxygenase aflU, but also the NADH-dependent flavin oxidoreductase nadA which is specifically required for the synthesis of AFG1. The chain is Versicolorin reductase 1 from Aspergillus parasiticus (strain ATCC 56775 / NRRL 5862 / SRRC 143 / SU-1).